Consider the following 361-residue polypeptide: MEHNGSASNADKIHQNRLSNVTEDEDQDAALTIVTVLDKVAAIVDSVQASQKRIEERHRVMENAIKSVQIDLLKFSQSHSNTGYVINKLFEKTRKVSAHIKDVKARVEKQQTHVKKVEAKQEEIMKKNKFRVVIFQEEVQCPTSLSVVKDRSLTESPEEVDEIFDTPVDLSSDEEYFVEESRSARLKKSGKERIDNIKKAFSKENMQKTRQNFDKKVNRIRTRIVTPERRERLRQSGERLRQSGERLKQSGERFKKSISNAAPSREAFKMRSLRKTKDRAVAEGPEEVREMGVDIIARGEALGPISELYPEALSETDPEEASATHPPQEGGEVSTPEPLKVTFKPQVKVEDDESLLLDLKQ.

The tract at residues 1–21 is disordered; it reads MEHNGSASNADKIHQNRLSNV. The stretch at 100 to 124 forms a coiled coil; that stretch reads IKDVKARVEKQQTHVKKVEAKQEEI. Residues Ser152, Ser171, and Ser172 each carry the phosphoserine modification. The stretch at 204-248 forms a coiled coil; it reads ENMQKTRQNFDKKVNRIRTRIVTPERRERLRQSGERLRQSGERLK. Basic and acidic residues predominate over residues 230-255; sequence RERLRQSGERLRQSGERLKQSGERFK. Disordered regions lie at residues 230-283 and 310-346; these read RERL…AVAE and PEALSETDPEEASATHPPQEGGEVSTPEPLKVTFKPQ. Thr335 carries the phosphothreonine modification. At Ser354 the chain carries Phosphoserine.

It belongs to the CAVIN family. In terms of assembly, component of the CAVIN complex composed of CAVIN1, CAVIN2, CAVIN3 and CAVIN4. Interacts with CAVIN1, ADRA1A, ADRA1B, MAPK1 and MAPK3. Interacts with CAVIN2; this augments the transactivation of NPPA.

Its subcellular location is the cytoplasm. The protein localises to the myofibril. The protein resides in the sarcomere. It localises to the cytosol. It is found in the cell membrane. Its subcellular location is the sarcolemma. The protein localises to the membrane. The protein resides in the caveola. Functionally, modulates the morphology of formed caveolae in cardiomyocytes, but is not required for caveolar formation. Facilitates the recruitment of MAPK1/3 to caveolae within cardiomyocytes and regulates alpha-1 adrenergic receptor-induced hypertrophic responses in cardiomyocytes through MAPK1/3 activation. Contributes to proper membrane localization and stabilization of caveolin-3 (CAV3) in cardiomyocytes. Induces RHOA activation and activates NPPA transcription and myofibrillar organization through the Rho/ROCK signaling pathway. The protein is Caveolae-associated protein 4 (CAVIN4) of Bos taurus (Bovine).